A 284-amino-acid chain; its full sequence is Tropomyosin Por p 1.0101 (284 aa).

Met1 is modified (N-acetylmethionine). Positions 1-21 are disordered; the sequence is MDAIKKKMQAMKLEKDDAMDR. The stretch at 1 to 280 forms a coiled coil; sequence MDAIKKKMQA…TDELDQAFSE (280 aa). The segment covering 12–21 has biased composition (basic and acidic residues); the sequence is KLEKDDAMDR.

This sequence belongs to the tropomyosin family. Homodimer. Expressed in muscle (at protein level). Expressed in pincer muscles.

In terms of biological role, tropomyosin, in association with the troponin complex, plays a central role in the calcium dependent regulation of muscle contraction. The chain is Tropomyosin Por p 1.0101 from Portunus pelagicus (Blue swimmer crab).